The primary structure comprises 173 residues: MVISIGCDHIVPDIKMKISEYLKSKGHTVIDNGTYDFVRTHYPIFGKAAAEKVASGEADLGVILCGTGVGISNSANKVKGIRAALVRDVGTARYAKEYLNANVIAVGGRITGIGLIENIIDVFLEAKYKPTKENQEIIKGIDELIENDKGQFGNEHFFDEFIEKWDNGGYPKE.

It belongs to the LacAB/RpiB family. As to quaternary structure, heteromultimeric protein consisting of LacA and LacB.

The catalysed reaction is aldehydo-D-galactose 6-phosphate = keto-D-tagatose 6-phosphate. It functions in the pathway carbohydrate metabolism; D-galactose 6-phosphate degradation; D-tagatose 6-phosphate from D-galactose 6-phosphate: step 1/1. This Clostridium acetobutylicum (strain ATCC 824 / DSM 792 / JCM 1419 / IAM 19013 / LMG 5710 / NBRC 13948 / NRRL B-527 / VKM B-1787 / 2291 / W) protein is Galactose-6-phosphate isomerase subunit LacB.